The primary structure comprises 165 residues: Chorismate pyruvate-lyase (165 aa).

Residues Met35, Arg77, Leu115, and Glu156 each contribute to the substrate site.

Belongs to the UbiC family. In terms of assembly, monomer.

Its subcellular location is the cytoplasm. The catalysed reaction is chorismate = 4-hydroxybenzoate + pyruvate. It participates in cofactor biosynthesis; ubiquinone biosynthesis. Functionally, removes the pyruvyl group from chorismate, with concomitant aromatization of the ring, to provide 4-hydroxybenzoate (4HB) for the ubiquinone pathway. This is Chorismate pyruvate-lyase from Escherichia coli O127:H6 (strain E2348/69 / EPEC).